The following is a 470-amino-acid chain: Sulfate adenylyltransferase subunit 1 (470 aa).

Positions lysine 22–glutamate 237 constitute a tr-type G domain. The G1 stretch occupies residues glycine 31–serine 38. Residue glycine 31–serine 38 coordinates GTP. The interval glycine 89 to aspartate 93 is G2. The interval aspartate 110–glycine 113 is G3. GTP-binding positions include aspartate 110–histidine 114 and asparagine 165–aspartate 168. The G4 stretch occupies residues asparagine 165–aspartate 168. Residues serine 202–lysine 204 form a G5 region.

Belongs to the TRAFAC class translation factor GTPase superfamily. Classic translation factor GTPase family. CysN/NodQ subfamily. Heterodimer composed of CysD, the smaller subunit, and CysN.

It carries out the reaction sulfate + ATP + H(+) = adenosine 5'-phosphosulfate + diphosphate. The protein operates within sulfur metabolism; hydrogen sulfide biosynthesis; sulfite from sulfate: step 1/3. In terms of biological role, with CysD forms the ATP sulfurylase (ATPS) that catalyzes the adenylation of sulfate producing adenosine 5'-phosphosulfate (APS) and diphosphate, the first enzymatic step in sulfur assimilation pathway. APS synthesis involves the formation of a high-energy phosphoric-sulfuric acid anhydride bond driven by GTP hydrolysis by CysN coupled to ATP hydrolysis by CysD. The chain is Sulfate adenylyltransferase subunit 1 from Methylorubrum populi (strain ATCC BAA-705 / NCIMB 13946 / BJ001) (Methylobacterium populi).